The following is a 201-amino-acid chain: Rho GDP-dissociation inhibitor 2 (201 aa).

Positions 1-38 (MTEKAPEPHVEEDDDDELDSKLNYKPPPQKSLKELQEM) are disordered. Residue Thr2 is modified to N-acetylthreonine. At Lys21 the chain carries N6-acetyllysine. Phosphotyrosine is present on Tyr24. N6-acetyllysine is present on residues Lys25, Lys40, Lys47, Lys102, and Lys124. The residue at position 145 (Ser145) is a Phosphoserine. The residue at position 175 (Lys175) is an N6-acetyllysine.

It belongs to the Rho GDI family. In terms of assembly, interacts with RHOA. Interacts with RAC1. Interacts with RAC2. Interacts with CDC42. Detected in bone marrow, thymus and spleen.

The protein localises to the cytoplasm. It is found in the cytosol. Functionally, regulates the GDP/GTP exchange reaction of the Rho proteins by inhibiting the dissociation of GDP from them, and the subsequent binding of GTP to them. Regulates reorganization of the actin cytoskeleton mediated by Rho family members. This chain is Rho GDP-dissociation inhibitor 2 (ARHGDIB), found in Homo sapiens (Human).